Consider the following 145-residue polypeptide: RxLR effector protein BLR40 (145 aa).

Positions 1–22 are cleaved as a signal peptide; it reads MLLSRAISVVALLACICCGVHT. Residues 44–58 carry the RxLR-dEER motif; sequence RRLRTSVDLVDNEER.

Belongs to the RxLR effector family.

The protein resides in the secreted. It localises to the host cell membrane. Its function is as follows. Secreted effector that triggers a robust hypersensitive response (HR) in Lactuca sativa cv. Design that is resistant to multiple B.lactucae races, including Bl:24. The sequence is that of RxLR effector protein BLR40 from Bremia lactucae (Lettuce downy mildew).